Here is a 243-residue protein sequence, read N- to C-terminus: Retrotransposon Gag-like protein 6 (243 aa).

The segment covering 1-12 (MVQPRTSKTESP) has biased composition (polar residues). Residues 1-22 (MVQPRTSKTESPASAPGASAQM) form a disordered region. The stretch at 29–69 (LTSLRLTNSALRREASTLRAEKANLTNMLESVMAELTLLRT) forms a coiled coil. 2 disordered regions span residues 84–105 (SAIT…PEPF) and 218–243 (TGSC…GRNL). Over residues 85–94 (AITSNGTRPM) the composition is skewed to polar residues.

The protein belongs to the LDOC1 family. Widely expressed.

The chain is Retrotransposon Gag-like protein 6 from Mus musculus (Mouse).